The following is a 424-amino-acid chain: Hemagglutinin-esterase (424 aa).

An N-terminal signal peptide occupies residues 1–16 (MFLLPRFCLVCSIIST). The interval 7–127 (FCLVCSIIST…NNDIWMQNKG (121 aa)) is esterase domain 1. Residues 17 to 392 (FGFQNPPTNV…PICVYDPLPI (376 aa)) lie on the Virion surface side of the membrane. Ser40 serves as the catalytic Nucleophile. Residues Cys44 and Cys65 are joined by a disulfide bond. Asn54, Asn89, Asn153, Asn236, and Asn301 each carry an N-linked (GlcNAc...) asparagine; by host glycan. 3 cysteine pairs are disulfide-bonded: Cys113-Cys162, Cys197-Cys276, and Cys205-Cys249. Residues 128-266 (LFYTQVYKKM…GNYLAISNEL (139 aa)) are receptor binding. Positions 267 to 379 (LLTVPTKAIC…NCPTAASIIS (113 aa)) are esterase domain 2. Residues Cys307 and Cys312 are joined by a disulfide bond. Residue Asn316 is glycosylated (N-linked (GlcNAc...) asparagine; by host). Catalysis depends on charge relay system residues Asp326 and His329. A disulfide bridge connects residues Cys347 and Cys371. An N-linked (GlcNAc...) asparagine; by host glycan is attached at Asn358. Residues 393 to 413 (ILLGILLGVAVIVIVVLLLYF) form a helical membrane-spanning segment. Residues 414 to 424 (MVDNGIRQHYA) are Intravirion-facing.

It belongs to the influenza type C/coronaviruses hemagglutinin-esterase family. Homodimer; disulfide-linked. Forms a complex with the M protein in the pre-Golgi. Associates then with S-M complex to form a ternary complex S-M-HE. In terms of processing, N-glycosylated in the host RER.

The protein resides in the virion membrane. Its subcellular location is the host cell membrane. It catalyses the reaction N-acetyl-9-O-acetylneuraminate + H2O = N-acetylneuraminate + acetate + H(+). It carries out the reaction N-acetyl-4-O-acetylneuraminate + H2O = N-acetylneuraminate + acetate + H(+). Its function is as follows. Structural protein that makes short spikes at the surface of the virus. Contains receptor binding and receptor-destroying activities. Mediates de-O-acetylation of N-acetyl-4-O-acetylneuraminic acid, which is probably the receptor determinant recognized by the virus on the surface of erythrocytes and susceptible cells. This receptor-destroying activity is important for virus release as it probably helps preventing self-aggregation and ensures the efficient spread of the progeny virus from cell to cell. May serve as a secondary viral attachment protein for initiating infection, the spike protein being the major one. May become a target for both the humoral and the cellular branches of the immune system. The polypeptide is Hemagglutinin-esterase (Sus scrofa (Pig)).